We begin with the raw amino-acid sequence, 622 residues long: MEGPGLGSQCRNHSHGPHPPGFGRYGICAHENKELANAREALPLIEDSSNCDIVKATQYGIFERCKELVEAGYDVRQPDKENVSLLHWAAINNRLDLVKFYISKGAVVDQLGGDLNSTPLHWAIRQGHLPMVILLLQHGADPTLIDGEGFSSIHLAVLFQHMPIIAYLISKGQSVNMTDVNGQTPLMLSAHKVIGPEPTGFLLKFNPSLNVVDKIHQNTPLHWAVAAGNVNAVDKLLEAGSSLDIQNVKGETPLDMALQNKNQLIIHMLKTEAKMRANQKFRLWRWLQKCELFLLLMLSVITMWAVGYILDFNSDSWLLKGCLLVTLFFLTSLFPRFLVGYKNLVYLPTAFLLSSVFWIFMTWFILFFPDLAGAPFYFSFIFSIVAFLYFFYKTWATDPGFTKASEEEKKVNIITLAETGSLDFRTFCTSCLIRKPLRSLHCHVCNSCVARYDQHCLWTGRCIGFGNHHYYIFFLFFLSMVCGWIIYGSFIYWSSHCATTFKEDGLWTYLNQIVACSPWVLYILMLATFHFSWSTFLLLNQLFQIAFLGLTSHERISLQKQSKHMKQTLSLRKTPYNLGFMQNLADFFQCGCFGLVKPCVVDWTSQYTVVFHPAREKVLRSV.

N-acetylmethionine is present on Met1. Over 1–291 the chain is Cytoplasmic; the sequence is MEGPGLGSQC…RLWRWLQKCE (291 aa). ANK repeat units lie at residues 43-78, 81-110, 115-144, 148-177, 181-211, 216-245, and 249-277; these read PLIE…VRQP, ENVS…VVDQ, LNST…DPTL, EGFS…SVNM, NGQT…SLNV, HQNT…SLDI, and KGET…KMRA. Residues 292–312 traverse the membrane as a helical segment; sequence LFLLLMLSVITMWAVGYILDF. Residues 313-320 are Lumenal-facing; that stretch reads NSDSWLLK. Residues 321–341 traverse the membrane as a helical segment; that stretch reads GCLLVTLFFLTSLFPRFLVGY. At 342–347 the chain is on the cytoplasmic side; sequence KNLVYL. The helical transmembrane segment at 348-368 threads the bilayer; that stretch reads PTAFLLSSVFWIFMTWFILFF. Over 369–370 the chain is Lumenal; the sequence is PD. The helical transmembrane segment at 371-391 threads the bilayer; sequence LAGAPFYFSFIFSIVAFLYFF. Topologically, residues 392–470 are cytoplasmic; that stretch reads YKTWATDPGF…RCIGFGNHHY (79 aa). In terms of domain architecture, DHHC spans 426–476; it reads TFCTSCLIRKPLRSLHCHVCNSCVARYDQHCLWTGRCIGFGNHHYYIFFLF. Cys456 acts as the S-palmitoyl cysteine intermediate in catalysis. A helical membrane pass occupies residues 471–491; it reads YIFFLFFLSMVCGWIIYGSFI. The Lumenal portion of the chain corresponds to 492-518; it reads YWSSHCATTFKEDGLWTYLNQIVACSP. Residues 519 to 539 traverse the membrane as a helical segment; sequence WVLYILMLATFHFSWSTFLLL. Residues 540–622 are Cytoplasmic-facing; it reads NQLFQIAFLG…PAREKVLRSV (83 aa).

The protein belongs to the DHHC palmitoyltransferase family. AKR/ZDHHC17 subfamily. As to quaternary structure, interacts (via ANK repeats) with CLIP3. Interacts (via ANK repeats) with DNAJC5 (via C-terminus). Interacts (via ANK repeats) with HTT. Interacts (via ANK repeats) with MAP6. Interacts (via ANK repeats) with SNAP23. Interacts (via ANK repeats) with SNAP25. May interact (via ANK repeats) with SPRED2.

Its subcellular location is the golgi apparatus membrane. The protein resides in the cytoplasmic vesicle membrane. It carries out the reaction L-cysteinyl-[protein] + hexadecanoyl-CoA = S-hexadecanoyl-L-cysteinyl-[protein] + CoA. Palmitoyltransferase that could catalyze the addition of palmitate onto various protein substrates. Palmitoyltransferase for HTT and GAD2. May play a role in Mg(2+) transport. This Pongo abelii (Sumatran orangutan) protein is Palmitoyltransferase ZDHHC13.